A 733-amino-acid polypeptide reads, in one-letter code: E3 ubiquitin-protein ligase COP1 (733 aa).

The interval 1-43 is disordered; sequence MSGSRQAGSGSAGTSPGSSAASSVTSASSSLSSSPSPPSVAAS. Residues 111–115 carry the Nuclear localization signal 1 motif; it reads SSRKR. Residues 138–176 form an RING-type zinc finger; that stretch reads CPICFDMIEEAYMTKCGHSFCYKCIHQSLEDNNRCPKCN. Positions 197 to 208 match the Nuclear localization signal 2 motif; the sequence is KQKQRFEEKRFK. Positions 231 to 306 form a coiled coil; sequence DQDNLDLANV…RVEEMSGLYS (76 aa). The Nuclear export signal motif lies at 237-247; that stretch reads LANVNLMLELL. Positions 307–327 are disordered; that stretch reads PVSEDSTVPQFEAPSPSHSSI. WD repeat units lie at residues 421–460, 470–510, 513–553, 555–595, 599–637, 640–679, and 695–731; these read NGSSIVSSIEFDRDCDYFAIAGVTKKIKVYEYGTVIQDAV, TCNS…RSKV, EHEK…SVAS, EAKA…QPIM, GHRKAVSYAKFVSGEEIVSASTDSQLKLWNVGKPYCLRS, GHINEKNFVGLASNGDYIACGSENNSLYLYYKGLSKTLLT, and EDDTNEFVSAVCWRALSDGESNVLIAANSQGTIKVLE. The segment at 645-647 is interaction with TRIB1; that stretch reads KNF.

This sequence belongs to the COP1 family. As to quaternary structure, homodimer. Homodimerization is mediated by the coiled coil domain. Component of the DCX DET1-COP1 ubiquitin ligase complex at least composed of RBX1, DET1, DDB1, CUL4A and COP1. Isoform 2 does not interact with CUL4A but still binds to RBX1, suggesting that the interaction may be mediated by another cullin protein. Isoform 1 and isoform 2 interact with CUL5 but not with CUL1, CUL2 not CUL3. Interacts with bZIP transcription factors JUN, JUNB and JUND but not with FOS, ATF2 nor XBP1. Interacts with p53 (TP53). Interacts with COPS6; this interaction stabilizes RFWD2 through reducing its auto-ubiquitination and decelerating its turnover rate. Interacts with SFN; this interaction leads to SFN degradation. Interacts with p53/TP53 and MTA1. Interacts with TRIB1 (via C-terminus) and TRIB2.

The protein localises to the nucleus speckle. It localises to the cytoplasm. It catalyses the reaction S-ubiquitinyl-[E2 ubiquitin-conjugating enzyme]-L-cysteine + [acceptor protein]-L-lysine = [E2 ubiquitin-conjugating enzyme]-L-cysteine + N(6)-ubiquitinyl-[acceptor protein]-L-lysine.. It functions in the pathway protein modification; protein ubiquitination. With respect to regulation, TRIB1 competes with substrates for RFWD2 binding. Functionally, E3 ubiquitin-protein ligase that mediates ubiquitination and subsequent proteasomal degradation of target proteins. E3 ubiquitin ligases accept ubiquitin from an E2 ubiquitin-conjugating enzyme in the form of a thioester and then directly transfers the ubiquitin to targeted substrates. Involved in JUN ubiquitination and degradation. Directly involved in p53 (TP53) ubiquitination and degradation, thereby abolishing p53-dependent transcription and apoptosis. Ubiquitinates p53 independently of MDM2 or RCHY1. Probably mediates E3 ubiquitin ligase activity by functioning as the essential RING domain subunit of larger E3 complexes. In contrast, it does not constitute the catalytic RING subunit in the DCX DET1-COP1 complex that negatively regulates JUN, the ubiquitin ligase activity being mediated by RBX1. Involved in 14-3-3 protein sigma/SFN ubiquitination and proteasomal degradation, leading to AKT activation and promotion of cell survival. Ubiquitinates MTA1 leading to its proteasomal degradation. Upon binding to TRIB1, ubiquitinates CEBPA, which lacks a canonical COP1-binding motif. This Mus musculus (Mouse) protein is E3 ubiquitin-protein ligase COP1.